The chain runs to 187 residues: GTP cyclohydrolase 1 (187 aa).

Residues Cys-78, His-81, and Cys-149 each coordinate Zn(2+).

The protein belongs to the GTP cyclohydrolase I family. In terms of assembly, toroid-shaped homodecamer, composed of two pentamers of five dimers.

It catalyses the reaction GTP + H2O = 7,8-dihydroneopterin 3'-triphosphate + formate + H(+). Its pathway is cofactor biosynthesis; 7,8-dihydroneopterin triphosphate biosynthesis; 7,8-dihydroneopterin triphosphate from GTP: step 1/1. This Wolinella succinogenes (strain ATCC 29543 / DSM 1740 / CCUG 13145 / JCM 31913 / LMG 7466 / NCTC 11488 / FDC 602W) (Vibrio succinogenes) protein is GTP cyclohydrolase 1.